Consider the following 103-residue polypeptide: Salivary thrombin inhibitor anophelin (103 aa).

The first 21 residues, 1–21 (MASKLFVLAFLCLALVVVVQS), serve as a signal peptide directing secretion. Residues 24-103 (QYARGDVPTY…PAASSSESDE (80 aa)) form a disordered region. The blocks exosite I of host thrombin stretch occupies residues 56-68 (EEFDPSLLEEHAD). Residues 74–77 (DPGR) form a blocks active site cleft of host thrombin in a reverse direction compared to substrates region. The segment covering 91 to 103 (ASAPAASSSESDE) has biased composition (low complexity).

The protein belongs to the anophelin family. In terms of assembly, interacts with human F2 (thrombin); the interaction results in thrombin inhibition. As to expression, female salivary gland (at protein level). Not detected in female midgut, head, carcass and male tissues (at protein level).

The protein resides in the secreted. Its activity is regulated as follows. Increasing concentration of NaCl decreases affinity for thrombin. Salivary protein with anticoagulant activity that inhibits host thrombin (F2); binds to the proteinase in a reverse orientation (opposite to substrates). This Anopheles gambiae (African malaria mosquito) protein is Salivary thrombin inhibitor anophelin.